A 172-amino-acid chain; its full sequence is MDLKSLIRDIPDFPKPGILFRDITTLLRDRQGLRYTIDFLAEKCFEANLDIDYVIGMESRGFIFGTPLAYKLGAGFIPVRKKGKLPAAVHSIEYELEYGTDCLEVHRDALHPDSRVLIVDDLIATGGTASATAKLVQQIGCELVGFGFIIELRDLQGRKHLPDVPIISLVEY.

Belongs to the purine/pyrimidine phosphoribosyltransferase family. Homodimer.

It localises to the cytoplasm. The catalysed reaction is AMP + diphosphate = 5-phospho-alpha-D-ribose 1-diphosphate + adenine. It functions in the pathway purine metabolism; AMP biosynthesis via salvage pathway; AMP from adenine: step 1/1. Its function is as follows. Catalyzes a salvage reaction resulting in the formation of AMP, that is energically less costly than de novo synthesis. The protein is Adenine phosphoribosyltransferase of Trichormus variabilis (strain ATCC 29413 / PCC 7937) (Anabaena variabilis).